The chain runs to 476 residues: Lipase (476 aa).

Residues 1–23 (MGIFDYKNLGTEGSKTLFADAMA) form the signal peptide. Residue Ser207 is the Charge relay system of the active site. 3 Hemolysin-type calcium-binding repeats span residues 372-389 (IGSDGNDLIQGGNGADFI), 390-407 (EGGKGNDTIRDNSGHNTF), and 410-427 (SGHFGNDRVIGYQPTDKL). 3 residues coordinate Ca(2+): Asp437, Asp440, and Asp448.

Belongs to the AB hydrolase superfamily. Lipase family.

The catalysed reaction is a triacylglycerol + H2O = a diacylglycerol + a fatty acid + H(+). The sequence is that of Lipase from Pseudomonas fluorescens.